We begin with the raw amino-acid sequence, 682 residues long: DNA ligase (682 aa).

NAD(+) is bound by residues 38-42, 87-88, and Glu119; these read DAEYD and SI. Catalysis depends on Lys121, which acts as the N6-AMP-lysine intermediate. Residues Arg142, Glu181, Lys298, and Lys322 each coordinate NAD(+). Residues Cys416, Cys419, Cys434, and Cys439 each coordinate Zn(2+). Residues 601-682 enclose the BRCT domain; sequence GHEMPLAGKT…LLSLLEPGER (82 aa).

The protein belongs to the NAD-dependent DNA ligase family. LigA subfamily. It depends on Mg(2+) as a cofactor. The cofactor is Mn(2+).

The enzyme catalyses NAD(+) + (deoxyribonucleotide)n-3'-hydroxyl + 5'-phospho-(deoxyribonucleotide)m = (deoxyribonucleotide)n+m + AMP + beta-nicotinamide D-nucleotide.. Its function is as follows. DNA ligase that catalyzes the formation of phosphodiester linkages between 5'-phosphoryl and 3'-hydroxyl groups in double-stranded DNA using NAD as a coenzyme and as the energy source for the reaction. It is essential for DNA replication and repair of damaged DNA. This is DNA ligase from Desulfosudis oleivorans (strain DSM 6200 / JCM 39069 / Hxd3) (Desulfococcus oleovorans).